A 972-amino-acid polypeptide reads, in one-letter code: UvrABC system protein A (972 aa).

32–39 is an ATP binding site; the sequence is GLSGSGKS. The C4-type; atypical zinc-finger motif lies at 257-285; sequence CPNGHALAVDDLEPRSFSFNSPYGACPEC. ABC transporter domains are found at residues 315 to 601 and 621 to 950; these read WSNG…KDSI and VDPR…KFLA. 654 to 661 contacts ATP; the sequence is GVSGSGKS. The C4-type zinc finger occupies 753–779; that stretch reads CEACTGDGTIKIEMNFLPDVYVPCEVC.

It belongs to the ABC transporter superfamily. UvrA family. Forms a heterotetramer with UvrB during the search for lesions.

The protein localises to the cytoplasm. The UvrABC repair system catalyzes the recognition and processing of DNA lesions. UvrA is an ATPase and a DNA-binding protein. A damage recognition complex composed of 2 UvrA and 2 UvrB subunits scans DNA for abnormalities. When the presence of a lesion has been verified by UvrB, the UvrA molecules dissociate. This is UvrABC system protein A from Mycobacterium bovis (strain ATCC BAA-935 / AF2122/97).